The chain runs to 254 residues: MRFDILTLFPAMFTGPLTESILKRAAQAELLQFHLHDIRDYATDKHKMVDDSPTGGGAGMVMKPGPLALCTQTVLSADPNPAPVVLMTPSGRVFNQTIAREWAQLPRLVLVCGHYEGIDERYIERYVTDQVSLGDFVLTGGELAAMTIVDAVGRLVPEVLDPESLLHESHDDGLLEYPHYTKPAEWNGVAVPPILLSGHHAKIAQWRHEQRLRRTLERRPDMLRHATLSKKDRQLLKEWGWEEKSEGKNQKAEG.

S-adenosyl-L-methionine is bound by residues G113 and 133–138; that span reads LGDFVL.

The protein belongs to the RNA methyltransferase TrmD family. In terms of assembly, homodimer.

Its subcellular location is the cytoplasm. The catalysed reaction is guanosine(37) in tRNA + S-adenosyl-L-methionine = N(1)-methylguanosine(37) in tRNA + S-adenosyl-L-homocysteine + H(+). Its function is as follows. Specifically methylates guanosine-37 in various tRNAs. This chain is tRNA (guanine-N(1)-)-methyltransferase, found in Herpetosiphon aurantiacus (strain ATCC 23779 / DSM 785 / 114-95).